A 142-amino-acid chain; its full sequence is 3-hydroxyacyl-[acyl-carrier-protein] dehydratase FabZ (142 aa).

Residue His-47 is part of the active site.

Belongs to the thioester dehydratase family. FabZ subfamily.

It is found in the cytoplasm. The enzyme catalyses a (3R)-hydroxyacyl-[ACP] = a (2E)-enoyl-[ACP] + H2O. In terms of biological role, involved in unsaturated fatty acids biosynthesis. Catalyzes the dehydration of short chain beta-hydroxyacyl-ACPs and long chain saturated and unsaturated beta-hydroxyacyl-ACPs. The polypeptide is 3-hydroxyacyl-[acyl-carrier-protein] dehydratase FabZ (Thermoanaerobacter sp. (strain X514)).